A 111-amino-acid chain; its full sequence is Protein GLUTAMINE DUMPER 6 (111 aa).

Topologically, residues 1–16 (MRPTPKVEIWKSPVPY) are extracellular. The helical transmembrane segment at 17 to 37 (LFGGLFLLVLLIALALLSLVC) threads the bilayer. Topologically, residues 38-111 (THQKPSSSSN…NCDNVTVIST (74 aa)) are cytoplasmic. The span at 40-49 (QKPSSSSNNN) shows a compositional bias: polar residues. The disordered stretch occupies residues 40–63 (QKPSSSSNNNHMDEEDDVGDKDAK). The VIMAG; degenerate signature appears at 75-79 (VILAG).

It belongs to the GLUTAMINE DUMPER 1 (TC 9.B.60) family. Expressed in the vascular tissues.

It localises to the membrane. In terms of biological role, probable subunit of an amino acid transporter involved in the regulation of the amino acid metabolism. Stimulates amino acid export by activating nonselective amino acid facilitators. This Arabidopsis thaliana (Mouse-ear cress) protein is Protein GLUTAMINE DUMPER 6 (GDU6).